The chain runs to 373 residues: MTQPIIRSIPLHVVSNDHPSSSPLQPGVKQSGEDKIGRSPVQFADVPVLRKPSWIRVRIPSGNAVQSLKAKLRENRLVTVCEEAACPNIHECFSHGTATFMILGEVCTRRCSFCDVAHGRPKPPDPEEPISLARTVAEMGLKYVVVTSVDRDDLRDGGAQHFVDCIAAIRQSAPQTRIEILTPDFRGKGRMDRALDILAACPPDVFNHNVETVPALYPNVRPGADYQWSLTLLKRFKAQHPQVPTKSGIMLGLGETLDQVQATLRDLRAHDVDMVTVGQYLQPTPHHHPVLRYWTPDEYKALEEYGMALGFSHVASGPMVRSSYHADHQAKEAGLGFNATVSLGSPAVSSTEHRERNTIASKSASKTESIHHR.

Positions Val-14–Ile-36 are disordered. [4Fe-4S] cluster is bound by residues Cys-81, Cys-86, Cys-92, Cys-107, Cys-111, Cys-114, and Ser-323. The region spanning Phe-93 to Ser-312 is the Radical SAM core domain. Residues Pro-346–Arg-373 form a disordered region. A compositionally biased stretch (polar residues) spans Thr-358–Thr-367.

It belongs to the radical SAM superfamily. Lipoyl synthase family. [4Fe-4S] cluster serves as cofactor.

The protein resides in the cytoplasm. It catalyses the reaction [[Fe-S] cluster scaffold protein carrying a second [4Fe-4S](2+) cluster] + N(6)-octanoyl-L-lysyl-[protein] + 2 oxidized [2Fe-2S]-[ferredoxin] + 2 S-adenosyl-L-methionine + 4 H(+) = [[Fe-S] cluster scaffold protein] + N(6)-[(R)-dihydrolipoyl]-L-lysyl-[protein] + 4 Fe(3+) + 2 hydrogen sulfide + 2 5'-deoxyadenosine + 2 L-methionine + 2 reduced [2Fe-2S]-[ferredoxin]. The protein operates within protein modification; protein lipoylation via endogenous pathway; protein N(6)-(lipoyl)lysine from octanoyl-[acyl-carrier-protein]: step 2/2. In terms of biological role, catalyzes the radical-mediated insertion of two sulfur atoms into the C-6 and C-8 positions of the octanoyl moiety bound to the lipoyl domains of lipoate-dependent enzymes, thereby converting the octanoylated domains into lipoylated derivatives. This Xylella fastidiosa (strain M23) protein is Lipoyl synthase.